The chain runs to 273 residues: Dermonecrotic toxin LapSicTox-alphaIB1c (273 aa).

His-5 is a catalytic residue. Residues Glu-25 and Asp-27 each contribute to the Mg(2+) site. His-41 (nucleophile) is an active-site residue. 2 cysteine pairs are disulfide-bonded: Cys-45-Cys-51 and Cys-47-Cys-190. Asp-85 provides a ligand contact to Mg(2+). A glycan (N-linked (GlcNAc...) asparagine) is linked at Asn-250.

It belongs to the arthropod phospholipase D family. Class II subfamily. It depends on Mg(2+) as a cofactor. In terms of tissue distribution, expressed by the venom gland.

Its subcellular location is the secreted. The enzyme catalyses an N-(acyl)-sphingosylphosphocholine = an N-(acyl)-sphingosyl-1,3-cyclic phosphate + choline. It catalyses the reaction an N-(acyl)-sphingosylphosphoethanolamine = an N-(acyl)-sphingosyl-1,3-cyclic phosphate + ethanolamine. It carries out the reaction a 1-acyl-sn-glycero-3-phosphocholine = a 1-acyl-sn-glycero-2,3-cyclic phosphate + choline. The catalysed reaction is a 1-acyl-sn-glycero-3-phosphoethanolamine = a 1-acyl-sn-glycero-2,3-cyclic phosphate + ethanolamine. Its function is as follows. Dermonecrotic toxins cleave the phosphodiester linkage between the phosphate and headgroup of certain phospholipids (sphingolipid and lysolipid substrates), forming an alcohol (often choline) and a cyclic phosphate. This toxin acts on sphingomyelin (SM). It may also act on ceramide phosphoethanolamine (CPE), lysophosphatidylcholine (LPC) and lysophosphatidylethanolamine (LPE), but not on lysophosphatidylserine (LPS), and lysophosphatidylglycerol (LPG). It acts by transphosphatidylation, releasing exclusively cyclic phosphate products as second products. Induces dermonecrosis, hemolysis, increased vascular permeability, edema, inflammatory response, and platelet aggregation. The protein is Dermonecrotic toxin LapSicTox-alphaIB1c of Loxosceles apachea (Apache recluse spider).